The primary structure comprises 440 residues: Phosphatidylglycerol--prolipoprotein diacylglyceryl transferase (440 aa).

4 consecutive transmembrane segments (helical) span residues 21–41 (VPIR…LLIG), 53–73 (GVIY…GRLY), 96–116 (IWDG…GAWI), and 122–142 (GIPL…AQAI). Residue R144 coordinates a 1,2-diacyl-sn-glycero-3-phospho-(1'-sn-glycerol). 2 consecutive transmembrane segments (helical) span residues 189-209 (VALV…LIFV) and 256-276 (INSF…MAAP). A disordered region spans residues 280 to 440 (EDPESLRGNQ…ARLRDRLSGR (161 aa)). Low complexity predominate over residues 299–330 (EPATVAATTEAATEGVAAPADGAEAAGADATA). The span at 332-346 (RPEESAEPDVEKPES) shows a compositional bias: basic and acidic residues. The segment covering 347–417 (EETEAEAAEE…PEQPVAEEPE (71 aa)) has biased composition (acidic residues). Residues 424–440 (ETKRRWGARLRDRLSGR) are compositionally biased toward basic and acidic residues.

This sequence belongs to the Lgt family.

The protein resides in the cell membrane. It carries out the reaction L-cysteinyl-[prolipoprotein] + a 1,2-diacyl-sn-glycero-3-phospho-(1'-sn-glycerol) = an S-1,2-diacyl-sn-glyceryl-L-cysteinyl-[prolipoprotein] + sn-glycerol 1-phosphate + H(+). It participates in protein modification; lipoprotein biosynthesis (diacylglyceryl transfer). Its function is as follows. Catalyzes the transfer of the diacylglyceryl group from phosphatidylglycerol to the sulfhydryl group of the N-terminal cysteine of a prolipoprotein, the first step in the formation of mature lipoproteins. This is Phosphatidylglycerol--prolipoprotein diacylglyceryl transferase from Mycobacterium avium (strain 104).